A 567-amino-acid polypeptide reads, in one-letter code: DNA ligase B (567 aa).

Lysine 132 (N6-AMP-lysine intermediate) is an active-site residue.

Belongs to the NAD-dependent DNA ligase family. LigB subfamily.

The catalysed reaction is NAD(+) + (deoxyribonucleotide)n-3'-hydroxyl + 5'-phospho-(deoxyribonucleotide)m = (deoxyribonucleotide)n+m + AMP + beta-nicotinamide D-nucleotide.. Catalyzes the formation of phosphodiester linkages between 5'-phosphoryl and 3'-hydroxyl groups in double-stranded DNA using NAD as a coenzyme and as the energy source for the reaction. In Yersinia pseudotuberculosis serotype IB (strain PB1/+), this protein is DNA ligase B.